Here is a 214-residue protein sequence, read N- to C-terminus: Thiamine-phosphate synthase (214 aa).

Residues 40-44 and asparagine 72 each bind 4-amino-2-methyl-5-(diphosphooxymethyl)pyrimidine; that span reads QLREK. Aspartate 73 and aspartate 92 together coordinate Mg(2+). Residue serine 110 coordinates 4-amino-2-methyl-5-(diphosphooxymethyl)pyrimidine. Residue 137–139 participates in 2-[(2R,5Z)-2-carboxy-4-methylthiazol-5(2H)-ylidene]ethyl phosphate binding; it reads SPT. 4-amino-2-methyl-5-(diphosphooxymethyl)pyrimidine is bound at residue lysine 140. Residues glycine 167 and 185–186 each bind 2-[(2R,5Z)-2-carboxy-4-methylthiazol-5(2H)-ylidene]ethyl phosphate; that span reads IS.

The protein belongs to the thiamine-phosphate synthase family. Requires Mg(2+) as cofactor.

The catalysed reaction is 2-[(2R,5Z)-2-carboxy-4-methylthiazol-5(2H)-ylidene]ethyl phosphate + 4-amino-2-methyl-5-(diphosphooxymethyl)pyrimidine + 2 H(+) = thiamine phosphate + CO2 + diphosphate. It catalyses the reaction 2-(2-carboxy-4-methylthiazol-5-yl)ethyl phosphate + 4-amino-2-methyl-5-(diphosphooxymethyl)pyrimidine + 2 H(+) = thiamine phosphate + CO2 + diphosphate. It carries out the reaction 4-methyl-5-(2-phosphooxyethyl)-thiazole + 4-amino-2-methyl-5-(diphosphooxymethyl)pyrimidine + H(+) = thiamine phosphate + diphosphate. Its pathway is cofactor biosynthesis; thiamine diphosphate biosynthesis; thiamine phosphate from 4-amino-2-methyl-5-diphosphomethylpyrimidine and 4-methyl-5-(2-phosphoethyl)-thiazole: step 1/1. In terms of biological role, condenses 4-methyl-5-(beta-hydroxyethyl)thiazole monophosphate (THZ-P) and 2-methyl-4-amino-5-hydroxymethyl pyrimidine pyrophosphate (HMP-PP) to form thiamine monophosphate (TMP). This is Thiamine-phosphate synthase from Wolinella succinogenes (strain ATCC 29543 / DSM 1740 / CCUG 13145 / JCM 31913 / LMG 7466 / NCTC 11488 / FDC 602W) (Vibrio succinogenes).